The sequence spans 119 residues: Large ribosomal subunit protein uL22c (119 aa).

It belongs to the universal ribosomal protein uL22 family. Part of the 50S ribosomal subunit.

The protein localises to the plastid. Its subcellular location is the chloroplast. Its function is as follows. This protein binds specifically to 23S rRNA. Functionally, the globular domain of the protein is located near the polypeptide exit tunnel on the outside of the subunit, while an extended beta-hairpin is found that lines the wall of the exit tunnel in the center of the 70S ribosome. The chain is Large ribosomal subunit protein uL22c (rpl22) from Chaetosphaeridium globosum (Charophycean green alga).